Here is an 885-residue protein sequence, read N- to C-terminus: DNA mismatch repair protein MutS (885 aa).

626-633 (GPNMGGKS) is an ATP binding site.

Belongs to the DNA mismatch repair MutS family.

Its function is as follows. This protein is involved in the repair of mismatches in DNA. It is possible that it carries out the mismatch recognition step. This protein has a weak ATPase activity. The chain is DNA mismatch repair protein MutS from Burkholderia ambifaria (strain MC40-6).